Here is a 124-residue protein sequence, read N- to C-terminus: Small ribosomal subunit protein uS12 (124 aa).

The segment at 1–30 (MPTIQQLVRKGRRDKVAKVKTAALKGSPQR) is disordered. Asp89 bears the 3-methylthioaspartic acid mark. Residues 105-124 (QGVKNRKQARSRYGAKKEKS) form a disordered region. Over residues 108 to 118 (KNRKQARSRYG) the composition is skewed to basic residues.

This sequence belongs to the universal ribosomal protein uS12 family. Part of the 30S ribosomal subunit. Contacts proteins S8 and S17. May interact with IF1 in the 30S initiation complex.

In terms of biological role, with S4 and S5 plays an important role in translational accuracy. Functionally, interacts with and stabilizes bases of the 16S rRNA that are involved in tRNA selection in the A site and with the mRNA backbone. Located at the interface of the 30S and 50S subunits, it traverses the body of the 30S subunit contacting proteins on the other side and probably holding the rRNA structure together. The combined cluster of proteins S8, S12 and S17 appears to hold together the shoulder and platform of the 30S subunit. This Mycobacterium intracellulare protein is Small ribosomal subunit protein uS12.